A 231-amino-acid polypeptide reads, in one-letter code: Uracil-DNA glycosylase (231 aa).

Catalysis depends on Asp-71, which acts as the Proton acceptor.

It belongs to the uracil-DNA glycosylase (UDG) superfamily. UNG family.

It localises to the cytoplasm. It catalyses the reaction Hydrolyzes single-stranded DNA or mismatched double-stranded DNA and polynucleotides, releasing free uracil.. Excises uracil residues from the DNA which can arise as a result of misincorporation of dUMP residues by DNA polymerase or due to deamination of cytosine. This is Uracil-DNA glycosylase from Pseudomonas aeruginosa (strain UCBPP-PA14).